Consider the following 118-residue polypeptide: Large ribosomal subunit protein bL20c (118 aa).

The protein belongs to the bacterial ribosomal protein bL20 family.

The protein resides in the plastid. Its function is as follows. Binds directly to 23S ribosomal RNA and is necessary for the in vitro assembly process of the 50S ribosomal subunit. It is not involved in the protein synthesizing functions of that subunit. This Cuscuta reflexa (Southern Asian dodder) protein is Large ribosomal subunit protein bL20c (rpl20).